We begin with the raw amino-acid sequence, 1028 residues long: Multidrug resistance protein MdtC (1028 aa).

12 helical membrane-spanning segments follow: residues 3-23, 333-353, 360-380, 387-407, 431-451, 463-483, 528-548, 853-873, 875-895, 897-917, 953-973, and 984-1004; these read FFAL…AITL, EVEQ…FLFL, LIPA…MYLC, LSLM…IVVL, VGFT…PLLL, FAVT…TLTP, LVGV…ISIP, VILI…LYES, VHPL…LLAL, LFNA…IGIV, PIMM…ISGG, and ITIV…TPVV.

The protein belongs to the resistance-nodulation-cell division (RND) (TC 2.A.6) family. MdtC subfamily. As to quaternary structure, part of a tripartite efflux system composed of MdtA, MdtB and MdtC. MdtC forms a heteromultimer with MdtB.

It localises to the cell inner membrane. This is Multidrug resistance protein MdtC from Citrobacter koseri (strain ATCC BAA-895 / CDC 4225-83 / SGSC4696).